Reading from the N-terminus, the 319-residue chain is Ribosomal RNA small subunit methyltransferase H (319 aa).

S-adenosyl-L-methionine-binding positions include 52-54 (GGH), D70, F100, D126, and Q133. Residues 289–319 (PKPLSPSELERQRNPRARSAKLRVAARSSQM) are disordered.

It belongs to the methyltransferase superfamily. RsmH family.

It is found in the cytoplasm. It carries out the reaction cytidine(1402) in 16S rRNA + S-adenosyl-L-methionine = N(4)-methylcytidine(1402) in 16S rRNA + S-adenosyl-L-homocysteine + H(+). Functionally, specifically methylates the N4 position of cytidine in position 1402 (C1402) of 16S rRNA. This is Ribosomal RNA small subunit methyltransferase H from Synechococcus sp. (strain JA-2-3B'a(2-13)) (Cyanobacteria bacterium Yellowstone B-Prime).